Reading from the N-terminus, the 501-residue chain is Cytochrome P450 71B23 (501 aa).

A helical membrane pass occupies residues 1–21 (MSIFLCFLLLLLLLLVTIIFT). A heme-binding site is contributed by Cys443.

The protein belongs to the cytochrome P450 family. Requires heme as cofactor.

It is found in the membrane. This Arabidopsis thaliana (Mouse-ear cress) protein is Cytochrome P450 71B23 (CYP71B23).